A 306-amino-acid polypeptide reads, in one-letter code: Stimulator of interferon genes protein 5 (306 aa).

Residues 1–50 are disordered; sequence MMSNDSQSEKRTAKWTGSGTPIAEGEESSSPSAHQTRQKATAADDDDDQQ. 2',3'-cGAMP is bound by residues Y119, R180, and R186.

Belongs to the STING family.

Functionally, facilitator of innate immune signaling that acts as a sensor of second messenger signals produced by cyclic GMP-AMP synthase-like receptors (cGLRs) and promotes the production of type I interferon. Innate immune response is triggered in response to nucleotides from viruses and bacteria delivered to the cytoplasm. Acts by binding cyclic dinucleotides: recognizes and binds 2'-3' linked cGAMP (2'-3'-cGAMP), a second messengers produced by cGLRs in response to nucleotides in the cytosol, such as double-stranded RNA (dsRNA). Upon binding to 2'-3'-cGAMP, oligomerizes and promotes the recruitment and subsequent activation of the transcription factor IRF3 to induce expression of type I interferon. The sequence is that of Stimulator of interferon genes protein 5 from Stylophora pistillata (Smooth cauliflower coral).